The following is a 672-amino-acid chain: Negative growth regulatory protein NGR1 (672 aa).

N-acetylmethionine is present on Met1. Composition is skewed to polar residues over residues 1 to 13 and 23 to 32; these read MMSN…QRQE and SSTVETSTEP. 2 disordered regions span residues 1-40 and 77-102; these read MMSN…WMGD and SSTS…NSTD. At Met2 the chain carries N-acetylserine. RRM domains lie at 36 to 159, 192 to 271, and 360 to 432; these read LWMG…YSPT, FSLF…YATP, and TTVF…WGRP. A compositionally biased stretch (low complexity) spans 77 to 96; the sequence is SSTSSSNNNTSEENAENQQS. Ser524 is subject to Phosphoserine. Positions 640 to 672 are disordered; sequence LNIAPNSNNSKSSIMNKHPNRNNVPPIHPSLLH. Residues 645–656 show a composition bias toward low complexity; it reads NSNNSKSSIMNK.

May be an RNA-binding protein involved in control of an RNA processing pathway that influences the regulation of cell growth in early log phase. Can bind to RNA and single-stranded DNA but not double-stranded DNA. The sequence is that of Negative growth regulatory protein NGR1 (NGR1) from Saccharomyces cerevisiae (strain ATCC 204508 / S288c) (Baker's yeast).